A 220-amino-acid polypeptide reads, in one-letter code: Deoxyribose-phosphate aldolase 1 (220 aa).

Residue Asp-89 is the Proton donor/acceptor of the active site. The Schiff-base intermediate with acetaldehyde role is filled by Lys-151. The active-site Proton donor/acceptor is the Lys-180.

This sequence belongs to the DeoC/FbaB aldolase family. DeoC type 1 subfamily.

The protein localises to the cytoplasm. The enzyme catalyses 2-deoxy-D-ribose 5-phosphate = D-glyceraldehyde 3-phosphate + acetaldehyde. The protein operates within carbohydrate degradation; 2-deoxy-D-ribose 1-phosphate degradation; D-glyceraldehyde 3-phosphate and acetaldehyde from 2-deoxy-alpha-D-ribose 1-phosphate: step 2/2. Catalyzes a reversible aldol reaction between acetaldehyde and D-glyceraldehyde 3-phosphate to generate 2-deoxy-D-ribose 5-phosphate. The sequence is that of Deoxyribose-phosphate aldolase 1 from Staphylococcus aureus (strain bovine RF122 / ET3-1).